A 352-amino-acid polypeptide reads, in one-letter code: Sphingosine 1-phosphate receptor 2 (352 aa).

Topologically, residues Met1–Lys34 are extracellular. Asn19 carries N-linked (GlcNAc...) asparagine glycosylation. A helical transmembrane segment spans residues Val35–Ala59. Over Arg60 to Ser66 the chain is Cytoplasmic. A helical transmembrane segment spans residues Ala67 to Pro95. Topologically, residues Val96–Glu109 are extracellular. The chain crosses the membrane as a helical span at residues Gly110 to Ile128. At Glu129–Arg147 the chain is on the cytoplasmic side. The chain crosses the membrane as a helical span at residues Met148–Leu173. The Extracellular segment spans residues Asp174–His189. Residues Tyr190 to Val210 form a helical membrane-spanning segment. The Cytoplasmic segment spans residues Arg211–Lys233. A helical membrane pass occupies residues Thr234–Leu255. Residues Asp256–His271 are Extracellular-facing. The chain crosses the membrane as a helical span at residues Tyr272–Ser292. Topologically, residues Arg293–Val352 are cytoplasmic. Residue Cys305 is the site of S-palmitoyl cysteine attachment.

It belongs to the G-protein coupled receptor 1 family. As to expression, expressed in all developing tissues with highest levels detected in primitive, transformed cells. Relative abundance: lung &gt; kidney = skin = gut &gt; spleen &gt; brain &gt; liver.

It localises to the cell membrane. Its function is as follows. Receptor for the lysosphingolipid sphingosine 1-phosphate (S1P). S1P is a bioactive lysophospholipid that elicits diverse physiological effects on most types of cells and tissues. Receptor for the chemokine-like protein FAM19A5. Mediates the inhibitory effect of FAM19A5 on vascular smooth muscle cell proliferation and migration. In lymphoid follicles, couples the binding of S1P to the activation of GNA13 and downstream inhibition of AKT activation leading to suppression of germinal center (GC) B cell growth and migration outside the GC niche. The protein is Sphingosine 1-phosphate receptor 2 (S1pr2) of Rattus norvegicus (Rat).